Reading from the N-terminus, the 360-residue chain is Peptide chain release factor 1 (360 aa).

Position 235 is an N5-methylglutamine (Gln-235). The segment at 284–313 (AKRQQAEASTRRNLLGSGDRSDRNRTYNFP) is disordered.

It belongs to the prokaryotic/mitochondrial release factor family. Post-translationally, methylated by PrmC. Methylation increases the termination efficiency of RF1.

It localises to the cytoplasm. Its function is as follows. Peptide chain release factor 1 directs the termination of translation in response to the peptide chain termination codons UAG and UAA. The protein is Peptide chain release factor 1 of Salmonella agona (strain SL483).